The following is a 209-amino-acid chain: MIGLVGKKLGMSRIFTKEGSSIPITVIQIQENRITQIRNIKTDKYYAIQVTTGLKKLNRLKKPESGHFLKSGVIPGRGLWEFRINNNEKFQIGQSIKINIFNDIKKVDVTGISKGKGFSGTVKRWNFRTQDATHGNSLSHRVPGSIGQNQTPGRVFKGKKMAGHLGNNRVTVQNLNIVKIDQNRNLLLVKGAVPGPTGSDLIVKPAIKI.

Residue Gln-150 is modified to N5-methylglutamine.

Belongs to the universal ribosomal protein uL3 family. Part of the 50S ribosomal subunit. Forms a cluster with proteins L14 and L19. In terms of processing, methylated by PrmB.

Its function is as follows. One of the primary rRNA binding proteins, it binds directly near the 3'-end of the 23S rRNA, where it nucleates assembly of the 50S subunit. The protein is Large ribosomal subunit protein uL3 of Buchnera aphidicola subsp. Schizaphis graminum (strain Sg).